The primary structure comprises 526 residues: mRNA export factor ICP27 homolog (526 aa).

Zn(2+) is bound by residues Cys239, His344, Cys346, and Cys351. The segment at 239-351 (CVFNDNGHGD…NNHQCDDIGC (113 aa)) adopts a CHC2-type zinc-finger fold.

This sequence belongs to the HHV-1 ICP27 protein family.

It is found in the virion tegument. The protein localises to the virion. Its subcellular location is the host nucleus. It localises to the host cytoplasm. Immediate early (EI) protein that plays many roles during productive infection including regulation of viral gene expression and nuclear export of intronless viral RNAs. This Human herpesvirus 7 (strain JI) (HHV-7) protein is mRNA export factor ICP27 homolog.